We begin with the raw amino-acid sequence, 422 residues long: Glycine amidinotransferase, mitochondrial (422 aa).

Residues 1-37 constitute a mitochondrion transit peptide; that stretch reads MLRVRCVRGGSRGAEAVHYIGSMLRKGFVGWVQRSFQ. Catalysis depends on residues aspartate 253 and histidine 302. Cysteine 406 serves as the catalytic Amidino-cysteine intermediate.

It belongs to the amidinotransferase family. In terms of assembly, homodimer.

The protein resides in the mitochondrion inner membrane. The catalysed reaction is L-arginine + glycine = guanidinoacetate + L-ornithine. It participates in amine and polyamine biosynthesis; creatine biosynthesis; creatine from L-arginine and glycine: step 1/2. Functionally, catalyzes the biosynthesis of guanidinoacetate, the immediate precursor of creatine. Creatine plays a vital role in energy metabolism in muscle tissues. May play a role in embryonic and central nervous system development. In Xenopus tropicalis (Western clawed frog), this protein is Glycine amidinotransferase, mitochondrial.